Consider the following 107-residue polypeptide: uncharacterized protein (107 aa).

3 helical membrane-spanning segments follow: residues 20–40, 49–69, and 86–106; these read FISL…EVGI, PAIL…ISTV, and VVML…KLFL.

It localises to the membrane. This is an uncharacterized protein from Saccharomyces cerevisiae (strain ATCC 204508 / S288c) (Baker's yeast).